Reading from the N-terminus, the 304-residue chain is MDKLKAYKALTKVIPQDLVLLDEPMKNHTSFKIGGPADIMVIPETIDQLKSAIKLSKENQMPYFIIGNGSNLIVRDKGMRCIVIKIAEQFSKVSFQGNTVIAEAGILLSKLSKKIMAESLKGFEFASGIPGTLGGAITMNAGAYGGEMKDVVKGAHLLNDNGEVRYFTLEELELGYRTSIIQKQGYIALDVELALEKGDYQEILEITRDLTERRTTKQPLHLPSAGSVFKRPEGYFAGKLIQDSGLKGQRVGGAQVSELHSGFIVNVGDATAKDVLDLIQLIKDRVYETFHVQLETEVRIVGEE.

The region spanning 33-213 (IGGPADIMVI…LEITRDLTER (181 aa)) is the FAD-binding PCMH-type domain. The active site involves R177. S227 (proton donor) is an active-site residue. The active site involves E297.

Belongs to the MurB family. It depends on FAD as a cofactor.

Its subcellular location is the cytoplasm. The enzyme catalyses UDP-N-acetyl-alpha-D-muramate + NADP(+) = UDP-N-acetyl-3-O-(1-carboxyvinyl)-alpha-D-glucosamine + NADPH + H(+). It participates in cell wall biogenesis; peptidoglycan biosynthesis. Its function is as follows. Cell wall formation. The protein is UDP-N-acetylenolpyruvoylglucosamine reductase of Alkaliphilus oremlandii (strain OhILAs) (Clostridium oremlandii (strain OhILAs)).